Here is a 92-residue protein sequence, read N- to C-terminus: Small ribosomal subunit protein uS19 (92 aa).

This sequence belongs to the universal ribosomal protein uS19 family.

In terms of biological role, protein S19 forms a complex with S13 that binds strongly to the 16S ribosomal RNA. The polypeptide is Small ribosomal subunit protein uS19 (Vibrio vulnificus (strain CMCP6)).